The sequence spans 245 residues: Protein crossbronx (245 aa).

Residues 20–177 (QQEYKILAEY…VQESIVESKS (158 aa)) enclose the UBC core domain.

Belongs to the ubiquitin-conjugating enzyme family. FTS subfamily.

The chain is Protein crossbronx (cbx) from Drosophila virilis (Fruit fly).